A 259-amino-acid chain; its full sequence is DNA repair protein RecO (259 aa).

It belongs to the RecO family.

Its function is as follows. Involved in DNA repair and RecF pathway recombination. This is DNA repair protein RecO from Rhizobium rhizogenes (strain K84 / ATCC BAA-868) (Agrobacterium radiobacter).